Here is a 751-residue protein sequence, read N- to C-terminus: Photosystem I P700 chlorophyll a apoprotein A1 (751 aa).

8 helical membrane passes run 72 to 95 (IFSAHFGHLAVVFVWLSGMYFHGA), 158 to 181 (LYCTAIGGLVMAALMLFAGWFHYH), 197 to 221 (MNHHLAGLLGLGSLGWAGHQIHVSM), 293 to 311 (TAHHHLAIAVLFIIAGHMY), 348 to 371 (WHAQLAINLALLGSLTIIVAQHMY), 387 to 413 (LSLFTHHMWIGGFLIVGAGAHGAIFMV), 435 to 457 (AIISHLNWVCIFLGFHSFGLYIH), and 532 to 550 (FMVHHIHAFTIHVTALILL). 2 residues coordinate [4Fe-4S] cluster: C574 and C583. Helical transmembrane passes span 590–611 (HVFLGLFWMYNSLSIVIFHFSW) and 665–687 (LSAYGIMFLAGHFVFAFSLMFLF). H676 lines the chlorophyll a' pocket. 2 residues coordinate chlorophyll a: M684 and Y692. W693 contacts phylloquinone. The chain crosses the membrane as a helical span at residues 725–745 (AVGVAHYLLGGIVTTWAFFLA).

The protein belongs to the PsaA/PsaB family. In terms of assembly, the PsaA/B heterodimer binds the P700 chlorophyll special pair and subsequent electron acceptors. PSI consists of a core antenna complex that captures photons, and an electron transfer chain that converts photonic excitation into a charge separation. The cyanobacterial PSI reaction center is composed of one copy each of PsaA,B,C,D,E,F,I,J,K,L,M and X, and forms trimeric complexes. It depends on PSI electron transfer chain: 5 chlorophyll a, 1 chlorophyll a', 2 phylloquinones and 3 4Fe-4S clusters. PSI core antenna: 90 chlorophyll a, 22 carotenoids, 3 phospholipids and 1 galactolipid. P700 is a chlorophyll a/chlorophyll a' dimer, A0 is one or more chlorophyll a, A1 is one or both phylloquinones and FX is a shared 4Fe-4S iron-sulfur center. as a cofactor.

Its subcellular location is the cellular thylakoid membrane. The enzyme catalyses reduced [plastocyanin] + hnu + oxidized [2Fe-2S]-[ferredoxin] = oxidized [plastocyanin] + reduced [2Fe-2S]-[ferredoxin]. Its function is as follows. PsaA and PsaB bind P700, the primary electron donor of photosystem I (PSI), as well as the electron acceptors A0, A1 and FX. PSI is a plastocyanin/cytochrome c6-ferredoxin oxidoreductase, converting photonic excitation into a charge separation, which transfers an electron from the donor P700 chlorophyll pair to the spectroscopically characterized acceptors A0, A1, FX, FA and FB in turn. Oxidized P700 is reduced on the lumenal side of the thylakoid membrane by plastocyanin or cytochrome c6. In Synechocystis sp. (strain ATCC 27184 / PCC 6803 / Kazusa), this protein is Photosystem I P700 chlorophyll a apoprotein A1.